We begin with the raw amino-acid sequence, 332 residues long: Holliday junction branch migration complex subunit RuvB (332 aa).

Residues 1–181 (MSRILDNEQM…FGITGHMEYY (181 aa)) are large ATPase domain (RuvB-L). ATP-binding positions include Leu-20, Arg-21, Gly-62, Lys-65, Thr-66, Thr-67, 128 to 130 (EDF), Arg-171, Tyr-181, and Arg-218. Residue Thr-66 coordinates Mg(2+). Residues 182–252 (EEADLTEIVE…ITDQALSMLD (71 aa)) are small ATPAse domain (RuvB-S). Residues 255–332 (HEGLDYVDQK…EHLGYEYMEK (78 aa)) form a head domain (RuvB-H) region. Positions 291, 310, 312, and 315 each coordinate DNA.

The protein belongs to the RuvB family. In terms of assembly, homohexamer. Forms an RuvA(8)-RuvB(12)-Holliday junction (HJ) complex. HJ DNA is sandwiched between 2 RuvA tetramers; dsDNA enters through RuvA and exits via RuvB. An RuvB hexamer assembles on each DNA strand where it exits the tetramer. Each RuvB hexamer is contacted by two RuvA subunits (via domain III) on 2 adjacent RuvB subunits; this complex drives branch migration. In the full resolvosome a probable DNA-RuvA(4)-RuvB(12)-RuvC(2) complex forms which resolves the HJ.

The protein localises to the cytoplasm. It catalyses the reaction ATP + H2O = ADP + phosphate + H(+). The RuvA-RuvB-RuvC complex processes Holliday junction (HJ) DNA during genetic recombination and DNA repair, while the RuvA-RuvB complex plays an important role in the rescue of blocked DNA replication forks via replication fork reversal (RFR). RuvA specifically binds to HJ cruciform DNA, conferring on it an open structure. The RuvB hexamer acts as an ATP-dependent pump, pulling dsDNA into and through the RuvAB complex. RuvB forms 2 homohexamers on either side of HJ DNA bound by 1 or 2 RuvA tetramers; 4 subunits per hexamer contact DNA at a time. Coordinated motions by a converter formed by DNA-disengaged RuvB subunits stimulates ATP hydrolysis and nucleotide exchange. Immobilization of the converter enables RuvB to convert the ATP-contained energy into a lever motion, pulling 2 nucleotides of DNA out of the RuvA tetramer per ATP hydrolyzed, thus driving DNA branch migration. The RuvB motors rotate together with the DNA substrate, which together with the progressing nucleotide cycle form the mechanistic basis for DNA recombination by continuous HJ branch migration. Branch migration allows RuvC to scan DNA until it finds its consensus sequence, where it cleaves and resolves cruciform DNA. This Streptococcus gordonii (strain Challis / ATCC 35105 / BCRC 15272 / CH1 / DL1 / V288) protein is Holliday junction branch migration complex subunit RuvB.